Reading from the N-terminus, the 130-residue chain is Glycine cleavage system H protein (130 aa).

The Lipoyl-binding domain occupies 22 to 103; that stretch reads KAYIGISDCA…PYGSWIAAIE (82 aa). Lysine 63 bears the N6-lipoyllysine mark.

It belongs to the GcvH family. In terms of assembly, the glycine cleavage system is composed of four proteins: P, T, L and H. (R)-lipoate is required as a cofactor.

Functionally, the glycine cleavage system catalyzes the degradation of glycine. The H protein shuttles the methylamine group of glycine from the P protein to the T protein. This Clostridium botulinum (strain Okra / Type B1) protein is Glycine cleavage system H protein.